Consider the following 409-residue polypeptide: Glutamyl-tRNA reductase (409 aa).

Substrate-binding positions include 46–49 (TCNR), Ser88, 93–95 (ENE), and Gln99. Cys47 serves as the catalytic Nucleophile. Residue 164–169 (GNGMIA) coordinates NADP(+).

This sequence belongs to the glutamyl-tRNA reductase family. Homodimer.

It catalyses the reaction (S)-4-amino-5-oxopentanoate + tRNA(Glu) + NADP(+) = L-glutamyl-tRNA(Glu) + NADPH + H(+). It functions in the pathway porphyrin-containing compound metabolism; protoporphyrin-IX biosynthesis; 5-aminolevulinate from L-glutamyl-tRNA(Glu): step 1/2. Catalyzes the NADPH-dependent reduction of glutamyl-tRNA(Glu) to glutamate 1-semialdehyde (GSA). The chain is Glutamyl-tRNA reductase from Thermoplasma acidophilum (strain ATCC 25905 / DSM 1728 / JCM 9062 / NBRC 15155 / AMRC-C165).